The sequence spans 227 residues: Aspartyl protease inhibitor (227 aa).

Positions 1–15 are cleaved as a signal peptide; the sequence is MKLVVLCVLCGIALA. Basic and acidic residues predominate over residues 88–109; sequence SLKSRMAGKKEKAVTPKEEDLP. A disordered region spans residues 88–116; that stretch reads SLKSRMAGKKEKAVTPKEEDLPKAPQKPS. The cysteines at positions 131 and 223 are disulfide-linked.

The protein belongs to the protease inhibitor I33 family.

Its subcellular location is the secreted. In terms of biological role, aspartyl protease inhibitor. In Ostertagia ostertagi (Brown stomach worm), this protein is Aspartyl protease inhibitor (API).